The sequence spans 427 residues: Serine hydroxymethyltransferase (427 aa).

(6S)-5,6,7,8-tetrahydrofolate is bound by residues Leu-122 and 126-128 (GHL). Lys-231 bears the N6-(pyridoxal phosphate)lysine mark. Residues Glu-247 and 355-357 (SPF) contribute to the (6S)-5,6,7,8-tetrahydrofolate site.

It belongs to the SHMT family. In terms of assembly, homodimer. Pyridoxal 5'-phosphate serves as cofactor.

The protein resides in the cytoplasm. It catalyses the reaction (6R)-5,10-methylene-5,6,7,8-tetrahydrofolate + glycine + H2O = (6S)-5,6,7,8-tetrahydrofolate + L-serine. The protein operates within one-carbon metabolism; tetrahydrofolate interconversion. It functions in the pathway amino-acid biosynthesis; glycine biosynthesis; glycine from L-serine: step 1/1. Functionally, catalyzes the reversible interconversion of serine and glycine with tetrahydrofolate (THF) serving as the one-carbon carrier. This reaction serves as the major source of one-carbon groups required for the biosynthesis of purines, thymidylate, methionine, and other important biomolecules. Also exhibits THF-independent aldolase activity toward beta-hydroxyamino acids, producing glycine and aldehydes, via a retro-aldol mechanism. The polypeptide is Serine hydroxymethyltransferase (Microcystis aeruginosa (strain NIES-843 / IAM M-2473)).